The chain runs to 414 residues: Probable indole-3-pyruvate monooxygenase YUCCA1 (414 aa).

An FAD-binding site is contributed by 25–30 (GAGPSG). 189–194 (GCGNSG) contacts NADP(+).

It belongs to the FMO family. Requires FAD as cofactor. In terms of tissue distribution, expressed in the apical meristems and young floral primordia. Detected in the floral meristems and at the base of the floral organs.

It carries out the reaction indole-3-pyruvate + NADPH + O2 + H(+) = (indol-3-yl)acetate + CO2 + NADP(+) + H2O. Its pathway is plant hormone metabolism; auxin biosynthesis. Functionally, involved in auxin biosynthesis, but not in the tryptamine or the CYP79B2/B3 branches. Catalyzes in vitro the N-oxidation of tryptamine to form N-hydroxyl tryptamine. Involved during embryogenesis and seedling development. Required for the formation of floral organs and vascular tissues. Belongs to the set of redundant YUCCA genes probably responsible for auxin biosynthesis in shoots. This Arabidopsis thaliana (Mouse-ear cress) protein is Probable indole-3-pyruvate monooxygenase YUCCA1 (YUC1).